Here is a 510-residue protein sequence, read N- to C-terminus: MDIIGGQHLRQMWDDLADVYGHKTALICESSGGVVNRYSYLELNQEINRTANLFYTLGIRKGNKVALHLDNCPEFIFCWFGLAKIGAIMVPINARLLREESEWILQNSQACLLVTSAQFYPMYQQIQQEDATQLRHICLTDVALPADDGVSSFTQLKNQQPATLCYAPPLSTDDTAEILFTSGTTSRPKGVVITHYNLRFAGYYSAWQCALRDDDVYMTVMPAFHIDCQCTAAMAAFSAGATFVLVEKYSARAFWGQAQKYRATITECIPMMIRTLMVQPPSANDRQHRLREVMFYLNLSEQEKDAFCERFGVRLLTSYGMTETIVGIIGDRPSDKRRWPSIGRAGFCYEAEIRDDHNRPLPAGEIGEICIKGVPGKTIFKEYFLNPKATAKVLEADGWLHTGDTGYRDEEGFFYFVDRRCNMIKRGGENVSCVELENIIATHPKIQDIVVVGIKDSIRDEAIKAFVVLNEGETLSEEEFFRFCDKIWRNLKCPLIWRSEKICHVIARGK.

Belongs to the ATP-dependent AMP-binding enzyme family.

The catalysed reaction is 4-(trimethylamino)butanoate + ATP + CoA = 4-(trimethylamino)butanoyl-CoA + AMP + diphosphate. It carries out the reaction crotonobetaine + ATP + CoA = crotonobetainyl-CoA + AMP + diphosphate. The enzyme catalyses (R)-carnitine + ATP + CoA = (R)-carnitinyl-CoA + AMP + diphosphate. It participates in amine and polyamine metabolism; carnitine metabolism. Functionally, catalyzes the transfer of CoA to carnitine, generating the initial carnitinyl-CoA needed for the CaiB reaction cycle. Also has activity toward crotonobetaine and gamma-butyrobetaine. In Shigella flexneri serotype 5b (strain 8401), this protein is Crotonobetaine/carnitine--CoA ligase.